The following is a 161-amino-acid chain: Ribonuclease P protein component (161 aa).

This sequence belongs to the RnpA family. As to quaternary structure, consists of a catalytic RNA component (M1 or rnpB) and a protein subunit.

It catalyses the reaction Endonucleolytic cleavage of RNA, removing 5'-extranucleotides from tRNA precursor.. Its function is as follows. RNaseP catalyzes the removal of the 5'-leader sequence from pre-tRNA to produce the mature 5'-terminus. It can also cleave other RNA substrates such as 4.5S RNA. The protein component plays an auxiliary but essential role in vivo by binding to the 5'-leader sequence and broadening the substrate specificity of the ribozyme. This chain is Ribonuclease P protein component, found in Helicobacter pylori (strain Shi470).